We begin with the raw amino-acid sequence, 388 residues long: Succinate--CoA ligase [ADP-forming] subunit beta (388 aa).

In terms of domain architecture, ATP-grasp spans K9–H244. ATP contacts are provided by residues K46, G53 to G55, E99, T102, and E107. Mg(2+) is bound by residues N199 and D213. Residues N264 and G321–V323 contribute to the substrate site.

The protein belongs to the succinate/malate CoA ligase beta subunit family. In terms of assembly, heterotetramer of two alpha and two beta subunits. The cofactor is Mg(2+).

The enzyme catalyses succinate + ATP + CoA = succinyl-CoA + ADP + phosphate. It carries out the reaction GTP + succinate + CoA = succinyl-CoA + GDP + phosphate. It functions in the pathway carbohydrate metabolism; tricarboxylic acid cycle; succinate from succinyl-CoA (ligase route): step 1/1. Succinyl-CoA synthetase functions in the citric acid cycle (TCA), coupling the hydrolysis of succinyl-CoA to the synthesis of either ATP or GTP and thus represents the only step of substrate-level phosphorylation in the TCA. The beta subunit provides nucleotide specificity of the enzyme and binds the substrate succinate, while the binding sites for coenzyme A and phosphate are found in the alpha subunit. The sequence is that of Succinate--CoA ligase [ADP-forming] subunit beta from Shewanella oneidensis (strain ATCC 700550 / JCM 31522 / CIP 106686 / LMG 19005 / NCIMB 14063 / MR-1).